The chain runs to 124 residues: S-adenosylmethionine decarboxylase proenzyme (124 aa).

The active-site Schiff-base intermediate with substrate; via pyruvic acid is Ser-71. Ser-71 is subject to Pyruvic acid (Ser); by autocatalysis. His-76 serves as the catalytic Proton acceptor; for processing activity. The Proton donor; for catalytic activity role is filled by Cys-91.

Belongs to the prokaryotic AdoMetDC family. Type 1 subfamily. As to quaternary structure, heterotetramer of two alpha and two beta chains arranged as a dimer of alpha/beta heterodimers. Pyruvate serves as cofactor. Post-translationally, is synthesized initially as an inactive proenzyme. Formation of the active enzyme involves a self-maturation process in which the active site pyruvoyl group is generated from an internal serine residue via an autocatalytic post-translational modification. Two non-identical subunits are generated from the proenzyme in this reaction, and the pyruvate is formed at the N-terminus of the alpha chain, which is derived from the carboxyl end of the proenzyme. The post-translation cleavage follows an unusual pathway, termed non-hydrolytic serinolysis, in which the side chain hydroxyl group of the serine supplies its oxygen atom to form the C-terminus of the beta chain, while the remainder of the serine residue undergoes an oxidative deamination to produce ammonia and the pyruvoyl group blocking the N-terminus of the alpha chain.

The catalysed reaction is S-adenosyl-L-methionine + H(+) = S-adenosyl 3-(methylsulfanyl)propylamine + CO2. The protein operates within amine and polyamine biosynthesis; S-adenosylmethioninamine biosynthesis; S-adenosylmethioninamine from S-adenosyl-L-methionine: step 1/1. Competitively inhibited by methylglyoxal bis-guanylhydrazone. Irreversibly inhibited by NaBH(4) in vitro. Functionally, catalyzes the decarboxylation of S-adenosylmethionine to S-adenosylmethioninamine (dcAdoMet), the propylamine donor required for the synthesis of the polyamines spermine and spermidine from the diamine putrescine. Has no arginine decarboxylase (ArgDC) activity. This is S-adenosylmethionine decarboxylase proenzyme (speH) from Saccharolobus solfataricus (strain ATCC 35092 / DSM 1617 / JCM 11322 / P2) (Sulfolobus solfataricus).